We begin with the raw amino-acid sequence, 319 residues long: MSLNFLDFEQPIAELEAKIDSLTAVSRQDEKLDINLDEEVQRLREKSVELTRKIFSDLGAWQIAQLARHPMRPYTLDYVRHIFTDFDELAGDRAYADDKAIVGGIARLDSRPVMIIGHQKGRETKEKIRRNFGMPAPEGYRKALRLMEMADRFNLPLFTFIDTPGAYPGVGAEERGQSEAIAKNLREMSGLRVPVICTVIGEGGSGGALAIGVGDKVNMLQYSTYSVISPEGCASILWKSADKAPIAAEAMGIIASRLKELELIDSIVPEPLGGAHRDVQAIAASLKAQLLDDLSELDGLNTEELLNRRYHRLMNYGYC.

The 262-residue stretch at 35-296 (NLDEEVQRLR…KAQLLDDLSE (262 aa)) folds into the CoA carboxyltransferase C-terminal domain.

Belongs to the AccA family. Acetyl-CoA carboxylase is a heterohexamer composed of biotin carboxyl carrier protein (AccB), biotin carboxylase (AccC) and two subunits each of ACCase subunit alpha (AccA) and ACCase subunit beta (AccD).

The protein localises to the cytoplasm. It carries out the reaction N(6)-carboxybiotinyl-L-lysyl-[protein] + acetyl-CoA = N(6)-biotinyl-L-lysyl-[protein] + malonyl-CoA. The protein operates within lipid metabolism; malonyl-CoA biosynthesis; malonyl-CoA from acetyl-CoA: step 1/1. In terms of biological role, component of the acetyl coenzyme A carboxylase (ACC) complex. First, biotin carboxylase catalyzes the carboxylation of biotin on its carrier protein (BCCP) and then the CO(2) group is transferred by the carboxyltransferase to acetyl-CoA to form malonyl-CoA. This Sodalis glossinidius (strain morsitans) protein is Acetyl-coenzyme A carboxylase carboxyl transferase subunit alpha.